Consider the following 672-residue polypeptide: DNA ligase (672 aa).

Residues 34 to 38 (DSVYD), 83 to 84 (SL), and E113 contribute to the NAD(+) site. Catalysis depends on K115, which acts as the N6-AMP-lysine intermediate. The NAD(+) site is built by R136, E170, K286, and K310. Residues C404, C407, C422, and C427 each contribute to the Zn(2+) site. Positions 592–672 (STDSSFNGLR…EFIQQMEEES (81 aa)) constitute a BRCT domain.

Belongs to the NAD-dependent DNA ligase family. LigA subfamily. Mg(2+) is required as a cofactor. The cofactor is Mn(2+).

The catalysed reaction is NAD(+) + (deoxyribonucleotide)n-3'-hydroxyl + 5'-phospho-(deoxyribonucleotide)m = (deoxyribonucleotide)n+m + AMP + beta-nicotinamide D-nucleotide.. DNA ligase that catalyzes the formation of phosphodiester linkages between 5'-phosphoryl and 3'-hydroxyl groups in double-stranded DNA using NAD as a coenzyme and as the energy source for the reaction. It is essential for DNA replication and repair of damaged DNA. In Ligilactobacillus salivarius (strain UCC118) (Lactobacillus salivarius), this protein is DNA ligase.